A 360-amino-acid chain; its full sequence is Mitogen-activated protein kinase 14 (360 aa).

Residue Ser-2 is modified to N-acetylserine. Ser-2 is subject to Phosphoserine. At Thr-16 the chain carries Phosphothreonine. In terms of domain architecture, Protein kinase spans 24-308; the sequence is YQNLSPVGSG…AAQALAHAYF (285 aa). Residues 30–38 and Lys-53 each bind ATP; that span reads VGSGAYGSV. Lys-53 carries the N6-acetyllysine modification. The active-site Proton acceptor is the Asp-150. Residue Lys-152 is modified to N6-acetyllysine. A Phosphothreonine; by MAP2K3, MAP2K4, MAP2K6 and autocatalysis modification is found at Thr-180. Tyr-182 bears the Phosphotyrosine; by MAP2K3, MAP2K4, MAP2K6 and autocatalysis mark. Position 263 is a phosphothreonine (Thr-263). Tyr-323 bears the Phosphotyrosine; by ZAP70 mark.

Belongs to the protein kinase superfamily. CMGC Ser/Thr protein kinase family. MAP kinase subfamily. Component of a signaling complex containing at least AKAP13, PKN1, MAPK14, ZAK and MAP2K3. Within this complex, AKAP13 interacts directly with PKN1, which in turn recruits MAPK14, MAP2K3 and ZAK. Binds to a kinase interaction motif within the protein tyrosine phosphatase, PTPRR. This interaction retains MAPK14 in the cytoplasm and prevents nuclear accumulation. Interacts with SPAG9 and GADD45A. Interacts with CDC25B, CDC25C, DUSP1, DUSP10, DUSP16, NP60, SUPT20H and TAB1. Interacts with casein kinase II subunits CSNK2A1 and CSNK2B. Interacts with PPM1D. Interacts with CDK5RAP3; recruits PPM1D to MAPK14 and may regulate its dephosphorylation. Interacts with DUSP2; this interaction does not lead to catalytic activation of DUSP2 and dephosphrylation of MAPK14. The cofactor is Mg(2+). Post-translationally, dually phosphorylated on Thr-180 and Tyr-182 by the MAP2Ks MAP2K3/MKK3, MAP2K4/MKK4 and MAP2K6/MKK6 in response to inflammatory cytokines, environmental stress or growth factors, which activates the enzyme. Dual phosphorylation can also be mediated by TAB1-mediated autophosphorylation. TCR engagement in T-cells also leads to Tyr-323 phosphorylation by ZAP70. Dephosphorylated and inactivated by DUPS1, DUSP10 and DUSP16. PPM1D also mediates dephosphorylation and inactivation of MAPK14. In terms of processing, acetylated at Lys-53 and Lys-152 by KAT2B and EP300. Acetylation at Lys-53 increases the affinity for ATP and enhances kinase activity. Lys-53 and Lys-152 are deacetylated by HDAC3. Ubiquitinated. Ubiquitination leads to degradation by the proteasome pathway.

It localises to the cytoplasm. The protein localises to the nucleus. It catalyses the reaction L-seryl-[protein] + ATP = O-phospho-L-seryl-[protein] + ADP + H(+). It carries out the reaction L-threonyl-[protein] + ATP = O-phospho-L-threonyl-[protein] + ADP + H(+). Activated by cell stresses such as DNA damage, heat shock, osmotic shock, anisomycin and sodium arsenite, as well as pro-inflammatory stimuli such as bacterial lipopolysaccharide (LPS) and interleukin-1. Activation occurs through dual phosphorylation of Thr-180 and Tyr-182 by either of two dual specificity kinases, MAP2K3/MKK3 or MAP2K6/MKK6, and potentially also MAP2K4/MKK4, as well as by TAB1-mediated autophosphorylation. MAPK14 phosphorylated on both Thr-180 and Tyr-182 is 10-20-fold more active than MAPK14 phosphorylated only on Thr-180, whereas MAPK14 phosphorylated on Tyr-182 alone is inactive. whereas Thr-180 is necessary for catalysis, Tyr-182 may be required for auto-activation and substrate recognition. Phosphorylated at Tyr-323 by ZAP70 in an alternative activation pathway in response to TCR signaling in T-cells. This alternative pathway is inhibited by GADD45A. Inhibited by dual specificity phosphatases, such as DUSP1, DUSP10, and DUSP16. Specifically inhibited by the binding of pyridinyl-imidazole compounds, which are cytokine-suppressive anti-inflammatory drugs (CSAID). SB203580 is an inhibitor of MAPK14. Its function is as follows. Serine/threonine kinase which acts as an essential component of the MAP kinase signal transduction pathway. MAPK14 is one of the four p38 MAPKs which play an important role in the cascades of cellular responses evoked by extracellular stimuli such as pro-inflammatory cytokines or physical stress leading to direct activation of transcription factors. Accordingly, p38 MAPKs phosphorylate a broad range of proteins and it has been estimated that they may have approximately 200 to 300 substrates each. Some of the targets are downstream kinases which are activated through phosphorylation and further phosphorylate additional targets. RPS6KA5/MSK1 and RPS6KA4/MSK2 can directly phosphorylate and activate transcription factors such as CREB1, ATF1, the NF-kappa-B isoform RELA/NFKB3, STAT1 and STAT3, but can also phosphorylate histone H3 and the nucleosomal protein HMGN1. RPS6KA5/MSK1 and RPS6KA4/MSK2 play important roles in the rapid induction of immediate-early genes in response to stress or mitogenic stimuli, either by inducing chromatin remodeling or by recruiting the transcription machinery. On the other hand, two other kinase targets, MAPKAPK2/MK2 and MAPKAPK3/MK3, participate in the control of gene expression mostly at the post-transcriptional level, by phosphorylating ZFP36 (tristetraprolin) and ELAVL1, and by regulating EEF2K, which is important for the elongation of mRNA during translation. MKNK1/MNK1 and MKNK2/MNK2, two other kinases activated by p38 MAPKs, regulate protein synthesis by phosphorylating the initiation factor EIF4E2. MAPK14 also interacts with casein kinase II, leading to its activation through autophosphorylation and further phosphorylation of TP53/p53. In the cytoplasm, the p38 MAPK pathway is an important regulator of protein turnover. For example, CFLAR is an inhibitor of TNF-induced apoptosis whose proteasome-mediated degradation is regulated by p38 MAPK phosphorylation. In a similar way, MAPK14 phosphorylates the ubiquitin ligase SIAH2, regulating its activity towards EGLN3. MAPK14 may also inhibit the lysosomal degradation pathway of autophagy by interfering with the intracellular trafficking of the transmembrane protein ATG9. Another function of MAPK14 is to regulate the endocytosis of membrane receptors by different mechanisms that impinge on the small GTPase RAB5A. In addition, clathrin-mediated EGFR internalization induced by inflammatory cytokines and UV irradiation depends on MAPK14-mediated phosphorylation of EGFR itself as well as of RAB5A effectors. Ectodomain shedding of transmembrane proteins is regulated by p38 MAPKs as well. In response to inflammatory stimuli, p38 MAPKs phosphorylate the membrane-associated metalloprotease ADAM17. Such phosphorylation is required for ADAM17-mediated ectodomain shedding of TGF-alpha family ligands, which results in the activation of EGFR signaling and cell proliferation. Another p38 MAPK substrate is FGFR1. FGFR1 can be translocated from the extracellular space into the cytosol and nucleus of target cells, and regulates processes such as rRNA synthesis and cell growth. FGFR1 translocation requires p38 MAPK activation. In the nucleus, many transcription factors are phosphorylated and activated by p38 MAPKs in response to different stimuli. Classical examples include ATF1, ATF2, ATF6, ELK1, PTPRH, DDIT3, TP53/p53 and MEF2C and MEF2A. The p38 MAPKs are emerging as important modulators of gene expression by regulating chromatin modifiers and remodelers. The promoters of several genes involved in the inflammatory response, such as IL6, IL8 and IL12B, display a p38 MAPK-dependent enrichment of histone H3 phosphorylation on 'Ser-10' (H3S10ph) in LPS-stimulated myeloid cells. This phosphorylation enhances the accessibility of the cryptic NF-kappa-B-binding sites marking promoters for increased NF-kappa-B recruitment. Phosphorylates CDC25B and CDC25C which is required for binding to 14-3-3 proteins and leads to initiation of a G2 delay after ultraviolet radiation. Phosphorylates TIAR following DNA damage, releasing TIAR from GADD45A mRNA and preventing mRNA degradation. The p38 MAPKs may also have kinase-independent roles, which are thought to be due to the binding to targets in the absence of phosphorylation. Protein O-Glc-N-acylation catalyzed by the OGT is regulated by MAPK14, and, although OGT does not seem to be phosphorylated by MAPK14, their interaction increases upon MAPK14 activation induced by glucose deprivation. This interaction may regulate OGT activity by recruiting it to specific targets such as neurofilament H, stimulating its O-Glc-N-acylation. Required in mid-fetal development for the growth of embryo-derived blood vessels in the labyrinth layer of the placenta. Also plays an essential role in developmental and stress-induced erythropoiesis, through regulation of EPO gene expression. Phosphorylates S100A9 at 'Thr-113'. The chain is Mitogen-activated protein kinase 14 from Pan troglodytes (Chimpanzee).